A 188-amino-acid polypeptide reads, in one-letter code: Large ribosomal subunit protein eL18 (188 aa).

A disordered region spans residues 147–188; the sequence is EAEKHFGPAPGVPHSHTKPYVRSKGRKFERARGRRASRAYKN. Basic residues-rich tracts occupy residues 161–171 and 178–188; these read SHTKPYVRSKG and RGRRASRAYKN.

This sequence belongs to the eukaryotic ribosomal protein eL18 family.

Its subcellular location is the cytoplasm. This chain is Large ribosomal subunit protein eL18 (rpl-18), found in Caenorhabditis elegans.